A 322-amino-acid polypeptide reads, in one-letter code: 2-oxoglutarate-dependent dioxygenase caaD (322 aa).

Residues 172 to 279 (TGNAAMFLKL…FAVPAFWHGD (108 aa)) form the Fe2OG dioxygenase domain. The Fe cation site is built by H200, D202, and H259. R269 serves as a coordination point for 2-oxoglutarate.

It belongs to the iron/ascorbate-dependent oxidoreductase family. The cofactor is Fe(2+).

Its pathway is secondary metabolite biosynthesis. Its function is as follows. 2-oxoglutarate-dependent dioxygenase; part of the gene cluster that produces the acyltetronic acid derivatives carlosic acid, agglomerin F and carlosic acid methyl ether. CaaD catalyzes the sequential oxidations of the terminal C-10 methyl group of the caaC product to form carboxylic acid which is necessary for the biosynthesis of agglomerin F. This chain is 2-oxoglutarate-dependent dioxygenase caaD, found in Aspergillus niger (strain ATCC MYA-4892 / CBS 513.88 / FGSC A1513).